Here is a 359-residue protein sequence, read N- to C-terminus: Peroxisome assembly protein 12 (359 aa).

Residues 1-24 (MSTTIRASQLASSISPKTEEKQPS) are Peroxisomal matrix-facing. Residues 25 to 52 (VFDIIAQENLATSIRPALQHLVKYLAFF) form a helical membrane-spanning segment. Residues 53–56 (KPKT) are Cytoplasmic-facing. Residues 57–81 (FLSVHRNFDEYYIIFDLILQNHYLR) form a helical membrane-spanning segment. The Peroxisomal matrix segment spans residues 82 to 106 (NYGASFTENFYSMKRIASGTGNPPN). Residues 107-128 (DGRERIMSLITLVGWPYVENKL) traverse the membrane as a helical segment. Topologically, residues 129-133 (NQLYD) are cytoplasmic. Residues 134-184 (RLKEVYECRSWSSINGMKAKCQKMFVIIWPYIKTALKAVKSALQLAYILNR) form a helical membrane-spanning segment. Topologically, residues 185–253 (SSIHSPWLYF…ILGLPGIVSR (69 aa)) are peroxisomal matrix. Residues 254–281 (LFAYGLFFVQFLDYMYNTDLAKLTKTGL) form a helical membrane-spanning segment. The Cytoplasmic portion of the chain corresponds to 282 to 359 (DGAIPSPPHK…NVQHLIRLFV (78 aa)). Residues Cys-307, Cys-310, Cys-328, and Cys-331 each coordinate Zn(2+). An RING-type; degenerate zinc finger spans residues 307 to 346 (CPICLKKRVNDTALFVSGYVFCYTCINQYVNTYNKCPVTG).

Belongs to the pex2/pex10/pex12 family. In terms of assembly, component of the PEX2-PEX10-PEX12 retrotranslocation channel.

Its subcellular location is the peroxisome membrane. The protein operates within protein modification; protein ubiquitination. Its function is as follows. Component of a retrotranslocation channel required for peroxisome organization by mediating export of the PEX5/prx-5 receptor from peroxisomes to the cytosol, thereby promoting PEX5/prx-5 recycling. The retrotranslocation channel is composed of PEX2/prx-2, PEX10/prx-10 and PEX12/prx-12; each subunit contributing transmembrane segments that coassemble into an open channel that specifically allows the passage of PEX5/prx-5 through the peroxisomal membrane. PEX12/prx-12 also regulates PEX5/prx-5 recycling by activating the E3 ubiquitin-protein ligase activity of PEX10/prx-10. When PEX5 recycling is compromised, PEX12/prx-12 stimulates PEX10-mediated polyubiquitination of PEX5/prx-5, leading to its subsequent degradation. The protein is Peroxisome assembly protein 12 (prx-12) of Caenorhabditis elegans.